Consider the following 84-residue polypeptide: Coiled-coil-helix-coiled-coil-helix domain-containing protein 7 (84 aa).

A CHCH domain is found at 12–54; sequence SNPCLEETDASTKCMDENQYQKDLCTSYFIKYKNCRKFWNGIM. 2 consecutive short sequence motifs (cx9C motif) follow at residues 15 to 25 and 36 to 46; these read CLEETDASTKC and CTSYFIKYKNC. Cystine bridges form between cysteine 15-cysteine 46 and cysteine 25-cysteine 36.

Belongs to the CHCHD7 family.

Its subcellular location is the mitochondrion intermembrane space. The chain is Coiled-coil-helix-coiled-coil-helix domain-containing protein 7 (chchd7) from Xenopus laevis (African clawed frog).